The primary structure comprises 525 residues: NAD(P)H-quinone oxidoreductase chain 4 1 (525 aa).

14 helical membrane passes run 6 to 26 (FPWLTTIILLPIAASLLIPII), 36 to 56 (WYALIVGLIDFALIVYAFYTS), 91 to 111 (LIILTGFITTLATLAAWPVTL), 115 to 135 (LFYFLLLAMYGGQIAVFAVQD), 136 to 156 (LLLFFLVWELELIPVYLLLAI), 169 to 189 (FILYTAGGSLFILLAALTMAF), 212 to 232 (LLLYAGFLIAYAIKLPIIPLH), 243 to 263 (TAPAHMLLAGILLKMGGYALI), 277 to 297 (FAPVLVVLGVVNIIYAALTSF), 314 to 334 (MGFVIIGFASFTDLGLSGAVL), 335 to 355 (QMVSHGLIGASLFFLVGATYD), 375 to 397 (IFAMFTACSMASLALPGMSGFVA), 417 to 437 (VIVVFLMAVGVILTPIYLLSM), and 464 to 484 (VFVIACLLVPIIGIGFYPKLL).

It belongs to the complex I subunit 4 family.

Its subcellular location is the cellular thylakoid membrane. The catalysed reaction is a plastoquinone + NADH + (n+1) H(+)(in) = a plastoquinol + NAD(+) + n H(+)(out). It carries out the reaction a plastoquinone + NADPH + (n+1) H(+)(in) = a plastoquinol + NADP(+) + n H(+)(out). NDH-1 shuttles electrons from NAD(P)H, via FMN and iron-sulfur (Fe-S) centers, to quinones in the respiratory chain. The immediate electron acceptor for the enzyme in this species is believed to be plastoquinone. Couples the redox reaction to proton translocation (for every two electrons transferred, four hydrogen ions are translocated across the cytoplasmic membrane), and thus conserves the redox energy in a proton gradient. This Trichormus variabilis (strain ATCC 29413 / PCC 7937) (Anabaena variabilis) protein is NAD(P)H-quinone oxidoreductase chain 4 1.